Here is a 589-residue protein sequence, read N- to C-terminus: Transcription factor MYC4 (589 aa).

Residues Asn99–Gly150 form a JAZ-interaction domain region. Disordered stretches follow at residues Glu114–Arg133, Ala291–Lys326, Ile340–Asn359, and Ala381–Arg422. A compositionally biased stretch (low complexity) spans Asn296–Ser308. Polar residues predominate over residues Gln309–Asn322. Positions Ala381–Lys398 are enriched in basic and acidic residues. Residues Lys399 to Ala408 are compositionally biased toward basic residues. Residues Asn409–Arg422 show a composition bias toward basic and acidic residues. The 50-residue stretch at Glu412–Leu461 folds into the bHLH domain.

As to quaternary structure, homo- and heterodimer. Interacts with MYB28, MYB29, MYB34, MYB51, MYB76, MYB122, MYC3, AFPH2/NINJA and the JAZ repressors TIFY10A/JAZ1, TIFY10B/JAZ2, TIFY6B/JAZ3, TIFY6A/JAZ4, TIFY11A/JAZ5, TIFY11B/JAZ6, TIFY5B/JAZ7, TIFY5A/JAZ8, TIFY7/JAZ9, TIFY9/JAZ10, TIFY3A/JAZ11 and TIFY3B/JAZ12. As to expression, expressed constitutively at low levels. Preferentially expressed in vascular tissues.

The protein localises to the nucleus. In terms of biological role, transcription factor involved in jasmonic acid (JA) gene regulation. With MYC2 and MYC3, controls additively subsets of JA-dependent responses. Can form complexes with all known glucosinolate-related MYBs to regulate glucosinolate biosynthesis. Binds to the G-box (5'-CACGTG-3') of promoters. Activates multiple TIFY/JAZ promoters. This chain is Transcription factor MYC4 (MYC4), found in Arabidopsis thaliana (Mouse-ear cress).